A 245-amino-acid chain; its full sequence is Type I iodothyronine deiodinase (245 aa).

At 1-9 (LSIRVLLHK) the chain is on the extracellular side. The chain crosses the membrane as a helical; Signal-anchor for type III membrane protein span at residues 10 to 30 (LLILLQVTLSVVVGKTMMILF). Residues 31–245 (PDTTKRYILK…EIRAVLEKLK (215 aa)) are Cytoplasmic-facing. Residue selenocysteine 123 is part of the active site. Position 123 (selenocysteine 123) is a non-standard amino acid, selenocysteine.

It belongs to the iodothyronine deiodinase family. As to quaternary structure, predominantly monomer. Can form homodimers but homodimerization is not essential for enzyme activity.

It is found in the cell membrane. Its subcellular location is the endoplasmic reticulum membrane. It localises to the basolateral cell membrane. The catalysed reaction is 3,3',5-triiodo-L-thyronine + iodide + A + H(+) = L-thyroxine + AH2. It catalyses the reaction 3,3',5'-triiodo-L-thyronine + iodide + A + H(+) = L-thyroxine + AH2. The enzyme catalyses 3,3'-diiodo-L-thyronine + iodide + A + H(+) = 3,3',5'-triiodo-L-thyronine + AH2. It carries out the reaction 3,3'-diiodo-L-thyronine + iodide + A + H(+) = 3,3',5-triiodo-L-thyronine + AH2. The catalysed reaction is 3'-iodo-L-thyronine + iodide + A + H(+) = 3',5'-diiodo-L-thyronine + AH2. It catalyses the reaction 3-iodo-L-thyronine + iodide + A + H(+) = 3,5-diiodo-L-thyronine + AH2. The enzyme catalyses 3-iodo-L-thyronine + iodide + A + H(+) = 3,3'-diiodo-L-thyronine + AH2. It carries out the reaction 3,3'-diiodothyronamine + iodide + A + H(+) = 3,3',5'-triiodothyronamine + AH2. The catalysed reaction is 3'-iodothyronamine + iodide + A + H(+) = 3',5'-diiodothyronamine + AH2. It catalyses the reaction 3-iodothyronamine + iodide + A + H(+) = 3,3'-diiodothyronamine + AH2. The enzyme catalyses 3,3'-diiodothyronamine + iodide + A + H(+) = 3,3',5-triiodothyronamine + AH2. It carries out the reaction 3-iodothyronamine + iodide + A + H(+) = 3,5-diiodothyronamine + AH2. The catalysed reaction is 3,3'-diiodo-L-thyronine sulfate + iodide + A + H(+) = 3,3',5'-triiodo-L-thyronine sulfate + AH2. It catalyses the reaction 3,3',5'-triiodo-L-thyronine sulfate + iodide + A + H(+) = L-thyroxine sulfate + AH2. The enzyme catalyses 3,3'-diiodo-L-thyronine sulfate + iodide + A + H(+) = 3,3',5-triiodo-L-thyronine sulfate + AH2. In terms of biological role, plays a crucial role in the metabolism of thyroid hormones (TH) and has specific roles in TH activation and inactivation by deiodination. Catalyzes the deiodiantion of L-thyroxine (T4) to 3,5,3'-triiodothyronine (T3) and 3,3',5'-triiodothyronine (rT3) to 3,3'-diiodothyronine (3,3'-T2) via outer-ring deiodination (ORD). Catalyzes the deiodiantion of T4 to rT3, T3 to 3,3'-T2, 3,5-diiodothyronine (3,5-T2) to 3-monoiodothyronine (3-T1) and 3,3'-T2 to 3-T1 via inner-ring deiodination (IRD). Catalyzes the deiodiantion of 3',5'-diiodothyronine (3',5'-T2) to 3'-monoiodothyronine (3'-T1) via ORD. Catalyzes the phenolic ring deiodinations of 3,3',5'-triiodothyronamine, 3',5'-diiodothyronamine and 3,3'-diiodothyronamine as well as tyrosyl ring deiodinations of 3,5,3'-triiodothyronamine and 3,5-diiodothyronamine. Catalyzes the deiodination of L-thyroxine sulfate and 3,3',5-triiodo-L-thyronine sulfate via IRD and of 3,3',5'-triiodo-L-thyronine sulfate via ORD. This Gallus gallus (Chicken) protein is Type I iodothyronine deiodinase (DIO1).